The primary structure comprises 205 residues: Thiamine-phosphate synthase (205 aa).

4-amino-2-methyl-5-(diphosphooxymethyl)pyrimidine is bound by residues 34 to 38 and N66; that span reads QLRCK. Residues D67 and D86 each contribute to the Mg(2+) site. A 4-amino-2-methyl-5-(diphosphooxymethyl)pyrimidine-binding site is contributed by S105. 131 to 133 is a 2-[(2R,5Z)-2-carboxy-4-methylthiazol-5(2H)-ylidene]ethyl phosphate binding site; it reads TTT. K134 is a binding site for 4-amino-2-methyl-5-(diphosphooxymethyl)pyrimidine. Residue G163 participates in 2-[(2R,5Z)-2-carboxy-4-methylthiazol-5(2H)-ylidene]ethyl phosphate binding.

It belongs to the thiamine-phosphate synthase family. The cofactor is Mg(2+).

It carries out the reaction 2-[(2R,5Z)-2-carboxy-4-methylthiazol-5(2H)-ylidene]ethyl phosphate + 4-amino-2-methyl-5-(diphosphooxymethyl)pyrimidine + 2 H(+) = thiamine phosphate + CO2 + diphosphate. It catalyses the reaction 2-(2-carboxy-4-methylthiazol-5-yl)ethyl phosphate + 4-amino-2-methyl-5-(diphosphooxymethyl)pyrimidine + 2 H(+) = thiamine phosphate + CO2 + diphosphate. The catalysed reaction is 4-methyl-5-(2-phosphooxyethyl)-thiazole + 4-amino-2-methyl-5-(diphosphooxymethyl)pyrimidine + H(+) = thiamine phosphate + diphosphate. Its pathway is cofactor biosynthesis; thiamine diphosphate biosynthesis; thiamine phosphate from 4-amino-2-methyl-5-diphosphomethylpyrimidine and 4-methyl-5-(2-phosphoethyl)-thiazole: step 1/1. Condenses 4-methyl-5-(beta-hydroxyethyl)thiazole monophosphate (THZ-P) and 2-methyl-4-amino-5-hydroxymethyl pyrimidine pyrophosphate (HMP-PP) to form thiamine monophosphate (TMP). The sequence is that of Thiamine-phosphate synthase from Neisseria gonorrhoeae (strain ATCC 700825 / FA 1090).